Consider the following 435-residue polypeptide: NADH-quinone oxidoreductase subunit D (435 aa).

This sequence belongs to the complex I 49 kDa subunit family. NDH-1 is composed of 14 different subunits. Subunits NuoB, C, D, E, F, and G constitute the peripheral sector of the complex.

It is found in the cell membrane. It catalyses the reaction a quinone + NADH + 5 H(+)(in) = a quinol + NAD(+) + 4 H(+)(out). Its function is as follows. NDH-1 shuttles electrons from NADH, via FMN and iron-sulfur (Fe-S) centers, to quinones in the respiratory chain. The immediate electron acceptor for the enzyme in this species is believed to be ubiquinone. Couples the redox reaction to proton translocation (for every two electrons transferred, four hydrogen ions are translocated across the cytoplasmic membrane), and thus conserves the redox energy in a proton gradient. The protein is NADH-quinone oxidoreductase subunit D of Stenotrophomonas maltophilia (strain K279a).